We begin with the raw amino-acid sequence, 687 residues long: Polyphosphate kinase (687 aa).

Residue Asn45 participates in ATP binding. Arg375 and Arg405 together coordinate Mg(2+). His435 serves as the catalytic Phosphohistidine intermediate. ATP contacts are provided by Tyr472, Arg568, and His596.

This sequence belongs to the polyphosphate kinase 1 (PPK1) family. It depends on Mg(2+) as a cofactor. An intermediate of this reaction is the autophosphorylated ppk in which a phosphate is covalently linked to a histidine residue through a N-P bond.

It catalyses the reaction [phosphate](n) + ATP = [phosphate](n+1) + ADP. Functionally, catalyzes the reversible transfer of the terminal phosphate of ATP to form a long-chain polyphosphate (polyP). The sequence is that of Polyphosphate kinase from Paraburkholderia phytofirmans (strain DSM 17436 / LMG 22146 / PsJN) (Burkholderia phytofirmans).